A 279-amino-acid polypeptide reads, in one-letter code: MTELTRIPLAGVIGSPIAHSRSPALHGYWLKRYGLKGHYIPMDVAQADLRDVLAAMPRMGFVGCNVTIPHKESVIGLADIVTDRAALIGAANTLIFRKDGKIYADNTDGTGFTANLRQNAPAWQPQSGPAVVWGAGGAARAVIAALIEVGVPEIRLANRSRARADALRSDFGAKVHVHDWVQAGNILEDAMTVVNTTSLGMVGKPEFRVPLDALNPKAVVTDLVYAPLRTRLLVEAEAAGCRTVDGLGMLLHQAAPGFERWFGVRPEVDEETRAAVLAA.

Residues 20 to 22 and Thr67 each bind shikimate; that span reads SRS. Residue Lys71 is the Proton acceptor of the active site. Asp83 contributes to the NADP(+) binding site. Residues Asn92 and Asp108 each contribute to the shikimate site. Residues 134–138 and Leu223 each bind NADP(+); that span reads GAGGA. Tyr225 contacts shikimate. An NADP(+)-binding site is contributed by Gly246.

This sequence belongs to the shikimate dehydrogenase family. As to quaternary structure, homodimer.

The enzyme catalyses shikimate + NADP(+) = 3-dehydroshikimate + NADPH + H(+). The protein operates within metabolic intermediate biosynthesis; chorismate biosynthesis; chorismate from D-erythrose 4-phosphate and phosphoenolpyruvate: step 4/7. In terms of biological role, involved in the biosynthesis of the chorismate, which leads to the biosynthesis of aromatic amino acids. Catalyzes the reversible NADPH linked reduction of 3-dehydroshikimate (DHSA) to yield shikimate (SA). The polypeptide is Shikimate dehydrogenase (NADP(+)) (Cereibacter sphaeroides (strain ATCC 17029 / ATH 2.4.9) (Rhodobacter sphaeroides)).